A 279-amino-acid polypeptide reads, in one-letter code: Large ribosomal subunit protein mL46 (279 aa).

Position 230 is an N6-acetyllysine (lysine 230).

Belongs to the mitochondrion-specific ribosomal protein mL46 family. Component of the mitochondrial ribosome large subunit (39S) which comprises a 16S rRNA and about 50 distinct proteins.

The protein localises to the mitochondrion. The polypeptide is Large ribosomal subunit protein mL46 (MRPL46) (Pongo abelii (Sumatran orangutan)).